The chain runs to 198 residues: Endoribonuclease YbeY (198 aa).

Positions 156, 160, and 166 each coordinate Zn(2+).

Belongs to the endoribonuclease YbeY family. The cofactor is Zn(2+).

It localises to the cytoplasm. Single strand-specific metallo-endoribonuclease involved in late-stage 70S ribosome quality control and in maturation of the 3' terminus of the 16S rRNA. This chain is Endoribonuclease YbeY, found in Cupriavidus necator (strain ATCC 17699 / DSM 428 / KCTC 22496 / NCIMB 10442 / H16 / Stanier 337) (Ralstonia eutropha).